A 371-amino-acid chain; its full sequence is Putative glutamate--cysteine ligase 2 (371 aa).

Belongs to the glutamate--cysteine ligase type 2 family. YbdK subfamily.

It carries out the reaction L-cysteine + L-glutamate + ATP = gamma-L-glutamyl-L-cysteine + ADP + phosphate + H(+). Its function is as follows. ATP-dependent carboxylate-amine ligase which exhibits weak glutamate--cysteine ligase activity. In Burkholderia cenocepacia (strain HI2424), this protein is Putative glutamate--cysteine ligase 2.